The sequence spans 395 residues: Probable G-protein coupled receptor npr-29 (395 aa).

4 helical membrane passes run valine 38–proline 58, isoleucine 66–leucine 86, isoleucine 89–phenylalanine 109, and alanine 148–alanine 168. Asparagine 180 carries an N-linked (GlcNAc...) asparagine glycan. 3 helical membrane-spanning segments follow: residues phenylalanine 202–tyrosine 222, valine 252–valine 272, and isoleucine 287–leucine 307.

Belongs to the G-protein coupled receptor 1 family.

The protein resides in the cell membrane. Its function is as follows. Not known. Putative receptor. In Caenorhabditis elegans, this protein is Probable G-protein coupled receptor npr-29.